The sequence spans 101 residues: NAD(P)H-quinone oxidoreductase subunit 4L, chloroplastic (101 aa).

Helical transmembrane passes span 2 to 22 (MLEH…YGLI), 32 to 52 (MCLE…SDFF), and 61 to 81 (IFSI…LAIV).

The protein belongs to the complex I subunit 4L family. NDH is composed of at least 16 different subunits, 5 of which are encoded in the nucleus.

The protein localises to the plastid. It is found in the chloroplast thylakoid membrane. It catalyses the reaction a plastoquinone + NADH + (n+1) H(+)(in) = a plastoquinol + NAD(+) + n H(+)(out). The enzyme catalyses a plastoquinone + NADPH + (n+1) H(+)(in) = a plastoquinol + NADP(+) + n H(+)(out). In terms of biological role, NDH shuttles electrons from NAD(P)H:plastoquinone, via FMN and iron-sulfur (Fe-S) centers, to quinones in the photosynthetic chain and possibly in a chloroplast respiratory chain. The immediate electron acceptor for the enzyme in this species is believed to be plastoquinone. Couples the redox reaction to proton translocation, and thus conserves the redox energy in a proton gradient. The polypeptide is NAD(P)H-quinone oxidoreductase subunit 4L, chloroplastic (Helianthus annuus (Common sunflower)).